The sequence spans 528 residues: Keratin, type II cytoskeletal 78 (528 aa).

The interval 1–104 (MSLSPCRARR…DPQFQVVRTQ (104 aa)) is head. Positions 23–45 (VGRGRTGFSSRSLSSFGGCRGGS) are disordered. Residues 24-39 (GRGRTGFSSRSLSSFG) show a composition bias toward low complexity. The coil 1A stretch occupies residues 105–140 (ETQQIRVLNNQFASFIDKVRFLEQQNKVLETKWHLL). Residues 105-418 (ETQQIRVLNN…RLLEGEECRM (314 aa)) form the IF rod domain. A linker 1 region spans residues 141-159 (QQQGLSDRPQGLESFFEAY). The coil 1B stretch occupies residues 160 to 252 (LVRLRTQLEE…LYEEELGQLQ (93 aa)). The segment at 253–275 (TQASDMSVVLSMDNNRCLDFRDL) is linker 12. Positions 276 to 415 (IAEVRARYEE…TYRRLLEGEE (140 aa)) are coil 2. Positions 416-528 (CRMSGECASQ…ESSLKTSVTY (113 aa)) are tail.

It belongs to the intermediate filament family. Heterotetramer of two type I and two type II keratins.

The sequence is that of Keratin, type II cytoskeletal 78 (KRT78) from Bos taurus (Bovine).